The primary structure comprises 395 residues: Alanine racemase 2 (395 aa).

Residue K60 is the Proton acceptor; specific for D-alanine of the active site. K60 bears the N6-(pyridoxal phosphate)lysine mark. R158 contributes to the substrate binding site. Y288 functions as the Proton acceptor; specific for L-alanine in the catalytic mechanism. Substrate is bound at residue M332.

It belongs to the alanine racemase family. It depends on pyridoxal 5'-phosphate as a cofactor.

The catalysed reaction is L-alanine = D-alanine. Its pathway is amino-acid biosynthesis; D-alanine biosynthesis; D-alanine from L-alanine: step 1/1. Catalyzes the interconversion of L-alanine and D-alanine. May also act on other amino acids. This chain is Alanine racemase 2 (alr2), found in Clostridium acetobutylicum (strain ATCC 824 / DSM 792 / JCM 1419 / IAM 19013 / LMG 5710 / NBRC 13948 / NRRL B-527 / VKM B-1787 / 2291 / W).